The primary structure comprises 65 residues: Large ribosomal subunit protein bL35 (65 aa).

The interval 1–46 is disordered; it reads MPKIKTNRGAAKRFKPTGSGGFKRAQSHRRHILTKKSTKRKRHLRS. Positions 25 to 45 are enriched in basic residues; that stretch reads AQSHRRHILTKKSTKRKRHLR.

The protein belongs to the bacterial ribosomal protein bL35 family.

The chain is Large ribosomal subunit protein bL35 from Thioalkalivibrio sulfidiphilus (strain HL-EbGR7).